We begin with the raw amino-acid sequence, 225 residues long: MESVVLLLAFISLVCGYVIDPCTPQERSTWHVSIKLCIRVQEYKISSRGCRLTQGPGGLIATGNGFKIFAYDECGHDEHSFLLTNIRESVYASGHGMYAEISNNVTYLDLVSPCARNITIIVSCDDITINAYGKNIDELHPDVTITTLIDTSCVRGHSFAYSINTLCTERLSGESCEQLACQAIKGSQHENYLKACELNAPEQYMFKEYKPHQRPHVAKVLRDEL.

This sequence belongs to the poxviruses B9 family.

The sequence is that of T4 protein from Rabbit fibroma virus (strain Kasza) (RFV).